The sequence spans 222 residues: PKHD-type hydroxylase P9301_13621 (222 aa).

Positions 81 to 175 (KIHGIMFTKS…RLVCVGWIES (95 aa)) constitute a Fe2OG dioxygenase domain. The Fe cation site is built by H99, D101, and H156. Residue R166 participates in 2-oxoglutarate binding.

The cofactor is Fe(2+). It depends on L-ascorbate as a cofactor.

The protein is PKHD-type hydroxylase P9301_13621 of Prochlorococcus marinus (strain MIT 9301).